We begin with the raw amino-acid sequence, 196 residues long: Large ribosomal subunit protein uL14my (196 aa).

The transit peptide at 1-62 (MATALASKLS…TILKCVDNSC (62 aa)) directs the protein to the mitochondrion. Positions 148 to 175 (EKKGQNNSHGSKRKMEYNQPTGTRVFGP) are disordered.

This sequence belongs to the universal ribosomal protein uL14 family. Part of the mitochondrial 50S ribosomal subunit. Mostly expressed in pistils and inflorescences, including floral organs and meristems, and, to a lower extent, in leaves.

The protein resides in the mitochondrion. In terms of biological role, binds to 23S rRNA in mitochondrion. Required for the formation of the proximal region of the ovule primordium during floral organogenesis, thus participating in patterning and growth of ovule. Also regulates the initiation and/or maintenance of integument and embryo sac ontogenesis. Prevents inappropriate cell death in the young ovule. This chain is Large ribosomal subunit protein uL14my (HLL), found in Arabidopsis thaliana (Mouse-ear cress).